The following is a 387-amino-acid chain: Phosphoglycerate kinase (387 aa).

Substrate-binding positions include 21-23, Arg36, 59-62, Arg113, and Arg146; these read DLN and HLGR. Residues Lys197, Glu314, and 340 to 343 contribute to the ATP site; that span reads GGDT.

The protein belongs to the phosphoglycerate kinase family. As to quaternary structure, monomer.

The protein localises to the cytoplasm. The catalysed reaction is (2R)-3-phosphoglycerate + ATP = (2R)-3-phospho-glyceroyl phosphate + ADP. The protein operates within carbohydrate degradation; glycolysis; pyruvate from D-glyceraldehyde 3-phosphate: step 2/5. This Pseudomonas syringae pv. syringae (strain B728a) protein is Phosphoglycerate kinase.